A 309-amino-acid chain; its full sequence is Ribosomal RNA small subunit methyltransferase H (309 aa).

Residues 41 to 43 (GGH), Asp61, Phe85, Asp102, and Gln109 contribute to the S-adenosyl-L-methionine site.

This sequence belongs to the methyltransferase superfamily. RsmH family.

Its subcellular location is the cytoplasm. It carries out the reaction cytidine(1402) in 16S rRNA + S-adenosyl-L-methionine = N(4)-methylcytidine(1402) in 16S rRNA + S-adenosyl-L-homocysteine + H(+). In terms of biological role, specifically methylates the N4 position of cytidine in position 1402 (C1402) of 16S rRNA. The polypeptide is Ribosomal RNA small subunit methyltransferase H (Albidiferax ferrireducens (strain ATCC BAA-621 / DSM 15236 / T118) (Rhodoferax ferrireducens)).